A 1238-amino-acid chain; its full sequence is uncharacterized protein (1238 aa).

Disordered regions lie at residues 22–83 (LQSA…QEHL), 96–150 (SSRQ…IASP), 169–250 (FEPD…HQML), 264–694 (QLNS…AAMV), 739–915 (TKAA…SVPE), 936–955 (THSA…APHE), and 1057–1089 (PKIS…QCSS). A compositionally biased stretch (low complexity) spans 35–49 (QPPNQQPHQTQQQQQ). Positions 58–72 (PSIQNLTTNATPTST) are enriched in polar residues. Residues 73-83 (QLQQQQQQEHL) show a composition bias toward low complexity. Residues 96–110 (SSRQNQGAPSGNLSN) show a composition bias toward polar residues. Over residues 125-145 (SVSGNTNHTGSNSSSNSGSNN) the composition is skewed to low complexity. Residues 188-204 (SASSASKLPTHNVQQQH) are compositionally biased toward polar residues. Composition is skewed to low complexity over residues 272–287 (SYQH…QSHP), 309–334 (PLLT…SSQH), and 393–406 (SNEE…NSSN). Over residues 433 to 450 (SKPQHPQQAANLNNSCSP) the composition is skewed to polar residues. Phosphoserine is present on Ser-453. Polar residues predominate over residues 463 to 472 (PFSTQKQSQT). The span at 523–536 (TEQHRMQQDDEPPK) shows a compositional bias: basic and acidic residues. 2 stretches are compositionally biased toward low complexity: residues 549–570 (QSNS…SQSS) and 632–641 (TTAAVAAPPA). Thr-642 bears the Phosphothreonine mark. The span at 678–688 (ERISSPEKPAE) shows a compositional bias: basic and acidic residues. A phosphoserine mark is found at Ser-682, Ser-749, and Ser-753. Polar residues predominate over residues 755-764 (IPQSRSTSTP). A phosphoserine mark is found at Ser-793 and Ser-799. A compositionally biased stretch (low complexity) spans 832–860 (STSAAAAAALAARQLSEAASATKSKPAAG). A compositionally biased stretch (basic residues) spans 861 to 874 (AKKKNAGVKGKKGS). Residues 937–947 (HSAEDVNEKQT) are compositionally biased toward basic and acidic residues. Positions 1071–1089 (DSSISYSDDPNESRSQCSS) are enriched in polar residues. The C2HC pre-PHD-type; degenerate zinc-finger motif lies at 1089 to 1131 (SVDLLDCSTESKFVETFRGMGKTSENGFEVWLHEDCAVWSNDI). Ser-1099 carries the phosphoserine modification. Residues 1151-1199 (YQCVLCQQTGASICCFQRCCKAAAHVPCGRSANWSLSEEDRKVYCHLHR) form a PHD-type zinc finger.

This is an uncharacterized protein from Drosophila melanogaster (Fruit fly).